Reading from the N-terminus, the 603-residue chain is NADH-ubiquinone oxidoreductase chain 5 (603 aa).

The next 15 helical transmembrane spans lie at 38-58, 87-107, 122-142, 144-160, 171-191, 211-233, 241-261, 272-292, 301-320, 325-347, 370-390, 407-429, 458-478, 482-502, and 582-602; these read SIVA…MCLD, MMFI…SLWY, LIFL…QLFI, WEGV…WWYA, AILY…WFIL, TPLL…HPWL, TPVS…FLLI, LIQT…AVCA, IVAF…IGIN, AFLH…GSII, STSL…TGFY, WALS…MILL, AAGS…ASPF, IPLY…LTAL, and GMIK…LLLI.

This sequence belongs to the complex I subunit 5 family. In terms of assembly, core subunit of respiratory chain NADH dehydrogenase (Complex I) which is composed of 45 different subunits.

Its subcellular location is the mitochondrion inner membrane. The catalysed reaction is a ubiquinone + NADH + 5 H(+)(in) = a ubiquinol + NAD(+) + 4 H(+)(out). Core subunit of the mitochondrial membrane respiratory chain NADH dehydrogenase (Complex I) which catalyzes electron transfer from NADH through the respiratory chain, using ubiquinone as an electron acceptor. Essential for the catalytic activity and assembly of complex I. In Homo sapiens (Human), this protein is NADH-ubiquinone oxidoreductase chain 5 (MT-ND5).